We begin with the raw amino-acid sequence, 74 residues long: Ferredoxin-like protein in nif region (74 aa).

In terms of domain architecture, 4Fe-4S ferredoxin-type spans 2–30; it reads PFKIIASQCTSCSACEPLCPNVAISEKGG. The [4Fe-4S] cluster site is built by Cys-10, Cys-13, Cys-16, Cys-20, Cys-39, Cys-51, and Cys-55.

The cofactor is [4Fe-4S] cluster.

This is Ferredoxin-like protein in nif region (frxA) from Bradyrhizobium diazoefficiens (strain JCM 10833 / BCRC 13528 / IAM 13628 / NBRC 14792 / USDA 110).